The sequence spans 66 residues: uncharacterized protein (66 aa).

This is an uncharacterized protein from Chlamydia pneumoniae (Chlamydophila pneumoniae).